The primary structure comprises 142 residues: Hemoglobin subunit beta (142 aa).

The region spanning 3–142 (KLSEDQEHYI…VAEALSSNYH (140 aa)) is the Globin domain. Heme b-binding residues include H60 and H89.

It belongs to the globin family. In terms of assembly, heterotetramer of two alpha chains and two beta chains. In terms of tissue distribution, red blood cells.

Functionally, involved in oxygen transport from gills to the various peripheral tissues. This Hemitrygon akajei (Red stingray) protein is Hemoglobin subunit beta (HBB).